A 157-amino-acid polypeptide reads, in one-letter code: MDKFPMTPEGYHALDEELKRRQQEERPRIIQAIAEARSHGDLSENAEYHAAKEAQSLNEGRIAELEDKLSRAEIIDVSKLSGNTVMFGATVTLVDEDTEEEKIYQIVGESEADVKAGRVSITSPTARALIGKKIGDSVEVNTPGGGKSYEILNVAFQ.

Residues 1 to 24 (MDKFPMTPEGYHALDEELKRRQQE) are disordered. Positions 12 to 24 (HALDEELKRRQQE) are enriched in basic and acidic residues. Residues 53–73 (EAQSLNEGRIAELEDKLSRAE) are a coiled coil.

The protein belongs to the GreA/GreB family.

Functionally, necessary for efficient RNA polymerase transcription elongation past template-encoded arresting sites. The arresting sites in DNA have the property of trapping a certain fraction of elongating RNA polymerases that pass through, resulting in locked ternary complexes. Cleavage of the nascent transcript by cleavage factors such as GreA or GreB allows the resumption of elongation from the new 3'terminus. GreA releases sequences of 2 to 3 nucleotides. The sequence is that of Transcription elongation factor GreA from Beijerinckia indica subsp. indica (strain ATCC 9039 / DSM 1715 / NCIMB 8712).